The sequence spans 240 residues: Leucyl/phenylalanyl-tRNA--protein transferase (240 aa).

This sequence belongs to the L/F-transferase family.

It is found in the cytoplasm. It catalyses the reaction N-terminal L-lysyl-[protein] + L-leucyl-tRNA(Leu) = N-terminal L-leucyl-L-lysyl-[protein] + tRNA(Leu) + H(+). The enzyme catalyses N-terminal L-arginyl-[protein] + L-leucyl-tRNA(Leu) = N-terminal L-leucyl-L-arginyl-[protein] + tRNA(Leu) + H(+). It carries out the reaction L-phenylalanyl-tRNA(Phe) + an N-terminal L-alpha-aminoacyl-[protein] = an N-terminal L-phenylalanyl-L-alpha-aminoacyl-[protein] + tRNA(Phe). In terms of biological role, functions in the N-end rule pathway of protein degradation where it conjugates Leu, Phe and, less efficiently, Met from aminoacyl-tRNAs to the N-termini of proteins containing an N-terminal arginine or lysine. This is Leucyl/phenylalanyl-tRNA--protein transferase from Maridesulfovibrio salexigens (strain ATCC 14822 / DSM 2638 / NCIMB 8403 / VKM B-1763) (Desulfovibrio salexigens).